A 603-amino-acid polypeptide reads, in one-letter code: Aquaporin-2 (603 aa).

A helical transmembrane segment spans residues 40 to 70 (SLKKYKYNLFFEFIGSFLFVFFISIYMLNSN). 2 stretches are compositionally biased toward basic and acidic residues: residues 135-149 (NNKS…DDKI) and 156-190 (EFEK…EDPK). A disordered region spans residues 135 to 200 (NNKSKREVER…NISNKNENYD (66 aa)). The span at 191 to 200 (NISNKNENYD) shows a compositional bias: polar residues. The next 5 helical transmembrane spans lie at 282-299 (HAIY…FILL), 321-346 (FALS…AHLY), 360-393 (IIKT…EENK), 442-471 (NKYI…VTNT), and 509-542 (ITKI…FLSL).

Belongs to the MIP/aquaporin (TC 1.A.8) family.

It localises to the endomembrane system. It carries out the reaction H2O(in) = H2O(out). The catalysed reaction is glycerol(in) = glycerol(out). Functionally, required for sporozoite development in the mosquito vector. The protein is Aquaporin-2 of Plasmodium falciparum (isolate NF54).